We begin with the raw amino-acid sequence, 792 residues long: Type 2 topoisomerase subunit B (792 aa).

The Toprim domain maps to C423 to P537. Mg(2+) is bound by residues E429, D502, and D504.

It belongs to the type II topoisomerase GyrB family. In terms of assembly, heterotetramer, composed of two GyrA and two GyrB chains. In the heterotetramer, 'GyrA' contains the active site tyrosine that forms a transient covalent intermediate with DNA, while 'GyrB' binds cofactors and catalyzes ATP hydrolysis. The cofactor is Mg(2+). Mn(2+) serves as cofactor. Ca(2+) is required as a cofactor.

It localises to the cytoplasm. It carries out the reaction ATP-dependent breakage, passage and rejoining of double-stranded DNA.. Its function is as follows. A type II topoisomerase. Despite its similarity to DNA gyrase, this enzyme is not able to supercoil DNA, and instead acts like topoisomerase IV. Relaxes both positively and negatively supercoiled DNA in an ATP-dependent fashion, decatenates interlocked circles. If this subunit is reconstituted with GyrA from E.coli the hybrid enzyme supercoils relaxed plasmid DNA; if paired with E.coli ParC supercoiling is not restored. This the first bacteria shown to not contain DNA gyrase, although it has 2 copies of a reverse gyrase that introduces positive supercoils. Type II topoisomerases break and join 2 DNA strands simultaneously in an ATP-dependent manner. This is Type 2 topoisomerase subunit B from Aquifex aeolicus (strain VF5).